The following is a 427-amino-acid chain: Serine hydroxymethyltransferase (427 aa).

Residues L124 and 128-130 (GHL) each bind (6S)-5,6,7,8-tetrahydrofolate. An N6-(pyridoxal phosphate)lysine modification is found at K233.

Belongs to the SHMT family. In terms of assembly, homodimer. It depends on pyridoxal 5'-phosphate as a cofactor.

The protein localises to the cytoplasm. The catalysed reaction is (6R)-5,10-methylene-5,6,7,8-tetrahydrofolate + glycine + H2O = (6S)-5,6,7,8-tetrahydrofolate + L-serine. It participates in one-carbon metabolism; tetrahydrofolate interconversion. Its pathway is amino-acid biosynthesis; glycine biosynthesis; glycine from L-serine: step 1/1. Its function is as follows. Catalyzes the reversible interconversion of serine and glycine with tetrahydrofolate (THF) serving as the one-carbon carrier. This reaction serves as the major source of one-carbon groups required for the biosynthesis of purines, thymidylate, methionine, and other important biomolecules. Also exhibits THF-independent aldolase activity toward beta-hydroxyamino acids, producing glycine and aldehydes, via a retro-aldol mechanism. The sequence is that of Serine hydroxymethyltransferase from Paracoccus denitrificans (strain Pd 1222).